The sequence spans 428 residues: C4-dicarboxylate transport protein (428 aa).

Helical transmembrane passes span Ser4–Gly24, Leu44–Met64, Val76–Val96, Ile142–Phe162, Val184–Met204, Leu222–Ala242, Val289–Leu309, Ile326–Val346, and Ile352–Ile372.

Belongs to the dicarboxylate/amino acid:cation symporter (DAACS) (TC 2.A.23) family.

The protein resides in the cell inner membrane. Its function is as follows. Responsible for the transport of dicarboxylates such as succinate, fumarate, and malate from the periplasm across the membrane. The chain is C4-dicarboxylate transport protein from Salmonella arizonae (strain ATCC BAA-731 / CDC346-86 / RSK2980).